We begin with the raw amino-acid sequence, 129 residues long: Follitropin subunit beta (129 aa).

Residues 1-19 (MKSVQFCFLFCCWRAICCR) form the signal peptide. 6 disulfides stabilise this stretch: cysteine 21–cysteine 69, cysteine 35–cysteine 84, cysteine 38–cysteine 122, cysteine 46–cysteine 100, cysteine 50–cysteine 102, and cysteine 105–cysteine 112. Residues asparagine 25 and asparagine 42 are each glycosylated (N-linked (GlcNAc...) asparagine).

The protein belongs to the glycoprotein hormones subunit beta family. As to quaternary structure, heterodimer. The active follitropin is a heterodimer composed of an alpha chain/CGA shared with other hormones and a unique beta chain/FSHB shown here.

The protein localises to the secreted. Its function is as follows. Together with the alpha chain CGA constitutes follitropin, the follicle-stimulating hormone, and provides its biological specificity to the hormone heterodimer. Binds FSHR, a G protein-coupled receptor, on target cells to activate downstream signaling pathways. Follitropin is involved in follicle development and spermatogenesis in reproductive organs. The polypeptide is Follitropin subunit beta (FSHB) (Ovis aries (Sheep)).